A 124-amino-acid polypeptide reads, in one-letter code: Large ribosomal subunit protein uL18 (124 aa).

Belongs to the universal ribosomal protein uL18 family. Part of the 50S ribosomal subunit; part of the 5S rRNA/L5/L18/L25 subcomplex. Contacts the 5S and 23S rRNAs.

In terms of biological role, this is one of the proteins that bind and probably mediate the attachment of the 5S RNA into the large ribosomal subunit, where it forms part of the central protuberance. This is Large ribosomal subunit protein uL18 from Koribacter versatilis (strain Ellin345).